An 80-amino-acid polypeptide reads, in one-letter code: FXYD domain-containing ion transport regulator 7 (80 aa).

Over 1 to 22 the chain is Extracellular; the sequence is MATPTQSPTNVPEETDPFFYDY. Thr3, Thr5, and Thr9 each carry an O-linked (GlcNAc) threonine glycan. A helical transmembrane segment spans residues 23–45; the sequence is ATVQTVGMTLATIMFVLGIIIII. Over 46–80 the chain is Cytoplasmic; it reads SKKVKCRKADSRSESPTCKSCKSELPSSAPGGGGV. Residues 56-80 are disordered; it reads SRSESPTCKSCKSELPSSAPGGGGV. Phosphoserine is present on Ser73.

This sequence belongs to the FXYD family. Regulatory subunit of the sodium/potassium-transporting ATPase which is composed of a catalytic alpha subunit, a non-catalytic beta subunit and an additional regulatory subunit. The regulatory subunit, a member of the FXYD protein family, modulates the enzymatic activity in a tissue- and isoform-specific way by changing affinities of the Na+/K+-ATPase toward Na(+), K(+) or ATP. O-glycosylated; required for stabilization and translocation to the plasma membrane. Expressed specifically in brain. Expressed in both neurons and glia.

The protein localises to the cell membrane. Its function is as follows. Associates with and regulates the activity of the sodium/potassium-transporting ATPase (NKA) which catalyzes the hydrolysis of ATP coupled with the exchange of Na(+) and K(+) ions across the plasma membrane. Reduces the apparent affinity for external K(+), an effect that depends on the presence of external Na(+) and voltage. Increases the apparent affinity for intracellular Na(+). The protein is FXYD domain-containing ion transport regulator 7 (Fxyd7) of Rattus norvegicus (Rat).